A 1073-amino-acid chain; its full sequence is Lon protease homolog, mitochondrial (1073 aa).

The transit peptide at 1–27 (MIKASKCNKARALFLVRTSIPRTFIRN) directs the protein to the mitochondrion. 2 stretches are compositionally biased toward basic and acidic residues: residues 69–107 (FDSK…RKDI) and 113–123 (YDIKEETDSKP). The interval 69-173 (FDSKKEKQPS…DKEFLSPSDA (105 aa)) is disordered. Residues 132 to 150 (SSKSSISSSSGGANNNNNN) are compositionally biased toward low complexity. Over residues 158 to 167 (DDGSPKDKEF) the composition is skewed to basic and acidic residues. Residues 177 to 395 (PPFLAIAMKD…LSLQLLQVEA (219 aa)) enclose the Lon N-terminal domain. 543–550 (GPPGTGKT) serves as a coordination point for ATP. The span at 775-785 (SVISDKAKKDA) shows a compositional bias: basic and acidic residues. Residues 775–821 (SVISDKAKKDAGSSSIESNDSNTEAKVSTTTENEKKQEQKQKQDEEI) are disordered. The segment covering 790–805 (IESNDSNTEAKVSTTT) has biased composition (polar residues). The span at 806 to 821 (ENEKKQEQKQKQDEEI) shows a compositional bias: basic and acidic residues. The Lon proteolytic domain occupies 856–1044 (TLNPGVATGL…SEVFEHLFKG (189 aa)). Residues S950 and K993 contribute to the active site.

This sequence belongs to the peptidase S16 family. As to quaternary structure, homohexamer or homoheptamer. Organized in a ring with a central cavity.

It is found in the mitochondrion matrix. The enzyme catalyses Hydrolysis of proteins in presence of ATP.. In terms of biological role, ATP-dependent serine protease that mediates the selective degradation of misfolded, unassembled or oxidatively damaged polypeptides as well as certain short-lived regulatory proteins in the mitochondrial matrix. May also have a chaperone function in the assembly of inner membrane protein complexes. Participates in the regulation of mitochondrial gene expression and in the maintenance of the integrity of the mitochondrial genome. Binds to mitochondrial DNA in a site-specific manner. The sequence is that of Lon protease homolog, mitochondrial from Candida dubliniensis (strain CD36 / ATCC MYA-646 / CBS 7987 / NCPF 3949 / NRRL Y-17841) (Yeast).